Here is a 490-residue protein sequence, read N- to C-terminus: Glutamate--tRNA ligase (490 aa).

The 'HIGH' region motif lies at 10–20 (PSPTGRMHVGN). Zn(2+) contacts are provided by Cys109, Cys111, Cys140, and His142. The 'KMSKS' region motif lies at 257–261 (KLSKR). Residue Lys260 participates in ATP binding.

Belongs to the class-I aminoacyl-tRNA synthetase family. Glutamate--tRNA ligase type 1 subfamily. As to quaternary structure, monomer. Requires Zn(2+) as cofactor.

The protein localises to the cytoplasm. The catalysed reaction is tRNA(Glu) + L-glutamate + ATP = L-glutamyl-tRNA(Glu) + AMP + diphosphate. In terms of biological role, catalyzes the attachment of glutamate to tRNA(Glu) in a two-step reaction: glutamate is first activated by ATP to form Glu-AMP and then transferred to the acceptor end of tRNA(Glu). The polypeptide is Glutamate--tRNA ligase (Lachnoclostridium phytofermentans (strain ATCC 700394 / DSM 18823 / ISDg) (Clostridium phytofermentans)).